A 149-amino-acid polypeptide reads, in one-letter code: Transthyretin (149 aa).

A signal peptide spans 1–20 (MAFHSLLLLCLAGLVFLSEA). At cysteine 32 the chain carries Sulfocysteine. Residue lysine 37 coordinates L-thyroxine. Glutamate 64 carries the post-translational modification 4-carboxyglutamate. The L-thyroxine site is built by glutamate 76 and serine 139.

It belongs to the transthyretin family. As to quaternary structure, homotetramer. Dimer of dimers. In the homotetramer, subunits assemble around a central channel that can accommodate two ligand molecules. Interacts with RBP4. In terms of processing, sulfonation of the reactive cysteine Cys-32 enhances the stability of the native conformation of TTR, avoiding misassembly of the protein leading to amyloid formation. In terms of tissue distribution, highly expressed in the choroid plexus.

The protein localises to the secreted. Thyroid hormone-binding protein. Probably transports thyroxine from the bloodstream to the brain. This is Transthyretin (TTR) from Sminthopsis macroura (Stripe-faced dunnart).